We begin with the raw amino-acid sequence, 443 residues long: GTPase Der (443 aa).

EngA-type G domains lie at 3–167 (PVIA…PEEK) and 176–349 (IKIA…QSIQ). GTP is bound by residues 9–16 (GRPNVGKS), 56–60 (DTGGL), 119–122 (NKAD), 182–189 (GRPNVGKS), 229–233 (DTAGI), and 294–297 (NKWD). One can recognise a KH-like domain in the interval 350–434 (QELTTGQLTR…PVHIKLKTDP (85 aa)).

This sequence belongs to the TRAFAC class TrmE-Era-EngA-EngB-Septin-like GTPase superfamily. EngA (Der) GTPase family. As to quaternary structure, associates with the 50S ribosomal subunit.

Functionally, GTPase that plays an essential role in the late steps of ribosome biogenesis. This is GTPase Der from Coxiella burnetii (strain CbuG_Q212) (Coxiella burnetii (strain Q212)).